Here is a 243-residue protein sequence, read N- to C-terminus: Orotidine 5'-phosphate decarboxylase (243 aa).

Substrate-binding positions include D19, K41, 69–78 (DLKFFDIPAT), T124, R185, Q194, G214, and R215. The active-site Proton donor is K71.

Belongs to the OMP decarboxylase family. Type 1 subfamily. As to quaternary structure, homodimer.

The enzyme catalyses orotidine 5'-phosphate + H(+) = UMP + CO2. Its pathway is pyrimidine metabolism; UMP biosynthesis via de novo pathway; UMP from orotate: step 2/2. Functionally, catalyzes the decarboxylation of orotidine 5'-monophosphate (OMP) to uridine 5'-monophosphate (UMP). The polypeptide is Orotidine 5'-phosphate decarboxylase (Xanthomonas campestris pv. campestris (strain B100)).